A 609-amino-acid polypeptide reads, in one-letter code: UvrABC system protein C (609 aa).

Residues 19–97 enclose the GIY-YIG domain; sequence ISPGCYLWKS…IKKHNPRFNV (79 aa). Residues 208–243 form the UVR domain; it reads ESLVGDLSIKMSASSNRMDFEKAARYRDMLQRIQNF.

This sequence belongs to the UvrC family. As to quaternary structure, interacts with UvrB in an incision complex.

The protein resides in the cytoplasm. Functionally, the UvrABC repair system catalyzes the recognition and processing of DNA lesions. UvrC both incises the 5' and 3' sides of the lesion. The N-terminal half is responsible for the 3' incision and the C-terminal half is responsible for the 5' incision. This Leptospira borgpetersenii serovar Hardjo-bovis (strain JB197) protein is UvrABC system protein C.